The chain runs to 1195 residues: MDKILEILKDFGIVELRPPQKKALERGLLDKNKNFLISIPTASGKTLIGEMALINHLLDGNKNPTNKKGIFIVPLKALASEKYEEFKSKYERYGLRIALSIGDYDEDEDLSKYHLIITTAEKLDSLWRHKIDWINDVSVVVVDEIHLINDETRGGTLEILLTKLKEFNVQIIGLSATIGNPDELAEWLNAELIVDDWRPVELKKGIYKNEAIEFINGEIREIKAVDNNDIYNLVVDCVKEGGCCLVFCNTKRNAVNEAKKLNLKKFLTEEEKIRLKEIAEEILSILEPPTEMCKTLAECILNGSAFHHAGLTYQHRKIVEDAFRKRLIKVICCTPTLCLNANTEILQESGFRKITELNKDEKVFALCGKEIKPVDGWKVHKTPQHEYNIVVKTVNGLEITTTPNHIFLVKENGSLKEKEAKDLKVGDYVATVDRIRVKEKDIDLSNGDLYFIGYFIGDGYTGVIEKNTLKATPDLAFNPKYPPNFDDSELHKKYFLKCRISKGVAHYIYSKKLRKIFNKLNMLTKDNKNIDAFCNLPLDKLAYLIAGLFDSDGYIYLNRKNIEFYSISEKLVEQLQFVLLRFGIHSSIRKKKTKTMVSPTNGKEYKCKDIYVLTIRDFMSIKRFYENIPLRHEEKRRKLEEIIKNKEIGQIPSEFVALRFTPIAKIWCDCGFSVDLTMFKPRTKRQRELNKKRVKLLFELLDGKKLITNYKEYYSKRKNPYFDFIVREKINGNNYYSLNEKGRVLMSLLNKHIKDKENLEEMYNFLVNLEKCPICGKPIHKEMRYSWKKECYDGDIYWDRIKEIKKIKVNDKYAYDIELPDDGSNSHYIVANGFIVHNSAGLNLPCRRAIVKDLTRFTNKGMRYIPIMEIQQCIGRAGRPGLDPYGEGIIVAKNDRDYLRAYQALTQKPEPIYSKLSNQAVLRTQLLGLIATGEIRDEYDLEWFIRNTFYAHQYGNLREVAKNINEVIRFLEENEFIIDFMPTELGKRVSELYIDPLSAKFIIDGLEEMENEEEIYYLYLISKTLEMMPNLRVYNSEELNLIDEMDSLGIKSFEIEDLEAFKTAKMLYDWINEVPEDEILKRYKIEPGILRYKVENAVWIMHALKEIAKLIGKSSDIPEKLEIRLEYGAKEDIIELLSIKYIGRVRARKLYNAGIRSIEDIINNPSKVASIIGEKIAKKILDELGVKFGQQKLSF.

Residues glutamine 20 and 39-46 (IPTASGKT) contribute to the ATP site. Positions 26 to 196 (RGLLDKNKNF…WLNAELIVDD (171 aa)) constitute a Helicase ATP-binding domain. Positions 143–146 (DEIH) match the DEAH box motif. Residues 451 to 584 (FIGYFIGDGY…LQFVLLRFGI (134 aa)) enclose the DOD-type homing endonuclease domain.

It belongs to the helicase family. Hel308 subfamily. In terms of assembly, monomer. This protein undergoes a protein self splicing that involves a post-translational excision of the intervening region (intein) followed by peptide ligation.

The enzyme catalyses Couples ATP hydrolysis with the unwinding of duplex DNA by translocating in the 3'-5' direction.. It catalyses the reaction ATP + H2O = ADP + phosphate + H(+). Its function is as follows. DNA-dependent ATPase and 3'-5' DNA helicase that may be involved in repair of stalled replication forks. The polypeptide is ATP-dependent DNA helicase Hel308 (Methanocaldococcus jannaschii (strain ATCC 43067 / DSM 2661 / JAL-1 / JCM 10045 / NBRC 100440) (Methanococcus jannaschii)).